Reading from the N-terminus, the 600-residue chain is Elongation factor 4 (600 aa).

The tr-type G domain maps to 5–187 (KYIRNFSIVA…EIVEKVPAPE (183 aa)). GTP contacts are provided by residues 17-22 (DHGKST) and 134-137 (NKVD).

It belongs to the TRAFAC class translation factor GTPase superfamily. Classic translation factor GTPase family. LepA subfamily.

It localises to the cell membrane. The enzyme catalyses GTP + H2O = GDP + phosphate + H(+). Its function is as follows. Required for accurate and efficient protein synthesis under certain stress conditions. May act as a fidelity factor of the translation reaction, by catalyzing a one-codon backward translocation of tRNAs on improperly translocated ribosomes. Back-translocation proceeds from a post-translocation (POST) complex to a pre-translocation (PRE) complex, thus giving elongation factor G a second chance to translocate the tRNAs correctly. Binds to ribosomes in a GTP-dependent manner. The chain is Elongation factor 4 from Clostridium perfringens (strain ATCC 13124 / DSM 756 / JCM 1290 / NCIMB 6125 / NCTC 8237 / Type A).